Here is a 994-residue protein sequence, read N- to C-terminus: Chloride channel protein 1 (994 aa).

The Cytoplasmic portion of the chain corresponds to 1 to 118 (MERSQSQQHG…VLRRKLGEDW (118 aa)). The segment at 37–61 (SENGGLQHRPRKDLGPRHNAHPTQI) is disordered. The helical transmembrane segment at 119–150 (IFLVLLGLLMALVSWCMDYVSAKSLQAYKWTY) threads the bilayer. Residues 151–158 (AQMQPSLP) are Extracellular-facing. Residues 159–179 (LQYLAWVTFPLILILFSALFC) traverse the membrane as a helical segment. The Cytoplasmic segment spans residues 180–183 (QLIS). The note=Loop between two helices intramembrane region spans 184-189 (PQAVGS). A Selectivity filter part_1 motif is present at residues 188-192 (GSGIP). Chloride is bound at residue S189. An intramembrane region (helical) is located at residues 190-195 (GIPEMK). Residues 196 to 208 (TILRGVVLKEYLT) are Cytoplasmic-facing. The helical intramembrane region spans 209–224 (LKAFVAKVVALTAGLG). The segment at residues 225-230 (SGIPVG) is an intramembrane region (note=Loop between two helices). The short motif at 230–234 (GKEGP) is the Selectivity filter part_2 element. The segment at residues 231–246 (KEGPFVHIASICAAVL) is an intramembrane region (helical). Residues 247-268 (SKFMSMFSGVYEQPYYYTDILT) lie on the Cytoplasmic side of the membrane. 2 consecutive intramembrane regions (helical) follow at residues 269–280 (VGCAVGVGCCFG) and 281–290 (TPLGGVLFSI). The Cytoplasmic segment spans residues 291 to 301 (EVTSTYFAVRN). Residues 302–321 (YWRGFFAATFSAFVFRVLAV) form a helical membrane-spanning segment. Residues 322-347 (WNKDAVTITALFRTNFRMDFPFDLKE) lie on the Extracellular side of the membrane. A helical transmembrane segment spans residues 348 to 376 (LPAFAVIGICCGFLGAVFVYLHRQVMLGV). Residues 377-390 (RKHKALSQFLAKHR) lie on the Cytoplasmic side of the membrane. A helical membrane pass occupies residues 391 to 408 (LLYPGIVTFVIASLTFPP). The Extracellular segment spans residues 409–414 (GMGQFM). The segment at residues 415–418 (AGEL) is an intramembrane region (note=Loop between two helices). The segment at residues 419–426 (MPREAIST) is an intramembrane region (helical). The Extracellular segment spans residues 427–457 (LFDNNTWVKHIGDPKSLGQSAVWIHPQVNVV). The segment at residues 458–475 (IIILLFFVMKFWMSIVAT) is an intramembrane region (helical). The segment at residues 476 to 482 (TMPIPCG) is an intramembrane region (note=Loop between two helices). Positions 482–486 (GGFMP) match the Selectivity filter part_3 motif. The segment at residues 483–498 (GFMPVFVLGAAFGRLV) is an intramembrane region (helical). F484 contributes to the chloride binding site. At 499–521 (GEIMAMLFPEGILFDDIIYKILP) the chain is on the extracellular side. An intramembrane region (helical) is located at residues 522–538 (GGYAVIGAAALTGAVSH). Positions 539–540 (TV) form an intramembrane region, note=Loop between two helices. Residues 541-554 (STAVICFELTGQIA) constitute an intramembrane region (helical). The Extracellular portion of the chain corresponds to 555–557 (HIL). An intramembrane region (helical) is located at residues 558 to 571 (PMMVAVILANMVAQ). The note=Loop between two helices intramembrane region spans 572–575 (SLQP). Positions 576 to 578 (SLY) form an intramembrane region, helical. Y578 is a chloride binding site. Residues 579-994 (DSIIQVKKLP…DEEDEDELIL (416 aa)) are Cytoplasmic-facing. Residues 609–668 (MVRDVKFVSASCTYGELRNLLQTTTVKTLPLVDSKDSMILLGSVERSELQSLLQRHLCAE) enclose the CBS 1 domain. 3 disordered regions span residues 710-769 (EDED…SADQ), 880-923 (TKSG…DGAP), and 965-994 (NLGP…ELIL). The span at 725 to 741 (TPTPPPPPPPPLPPQFP) shows a compositional bias: pro residues. Residues 827-882 (IDQSPFQLVEQTTLHKTHTLFSLLGLHLAYVTSMGKLRGVLALEELQKAIKGHTKS) form the CBS 2 domain. S892 carries the phosphoserine modification. Residues 985-994 (DEEDEDELIL) show a composition bias toward acidic residues.

It belongs to the chloride channel (TC 2.A.49) family. ClC-1/CLCN1 subfamily. As to quaternary structure, homodimer. Predominantly expressed in skeletal muscles.

Its subcellular location is the cell membrane. It localises to the sarcolemma. The protein localises to the T-tubule. The catalysed reaction is chloride(in) = chloride(out). The enzyme catalyses bromide(in) = bromide(out). It catalyses the reaction iodide(out) = iodide(in). It carries out the reaction thiocyanate(in) = thiocyanate(out). The catalysed reaction is nitrate(in) = nitrate(out). With respect to regulation, modulated by membrane voltage with depolarization favouring channel opening and hyperpolarization favouring channel closure. Inhibited by acidic pH and ATP binding due to a shift of voltage dependence of common gating to more positive voltages. Inhibited by 9-anthracene-carboxylic acid. Its function is as follows. Voltage-gated chloride channel involved in skeletal muscle excitability. Generates most of the plasma membrane chloride conductance in skeletal muscle fibers, stabilizes the resting membrane potential and contributes to the repolarization phase during action potential firing. Forms a homodimeric channel where each subunit has its own ion conduction pathway. Conducts double-barreled currents controlled by two types of gates, two fast glutamate gates that control each subunit independently and a slow common gate that opens and shuts off both subunits simultaneously. Has a significant open probability at muscle resting potential and is further activated upon membrane depolarization. Permeable to small monovalent anions with ion selectivity for chloride &gt; thiocyanate &gt; bromide &gt; nitrate &gt; iodide. This Rattus norvegicus (Rat) protein is Chloride channel protein 1 (Clcn1).